A 602-amino-acid polypeptide reads, in one-letter code: Protein SHORT-ROOT 1 (602 aa).

The span at 12-55 (AASEQQQQQQQSASYNSRSTTSSGSRSSSHQTNASYSYYHHSSN) shows a compositional bias: low complexity. Disordered stretches follow at residues 12–69 (AASE…YYYG), 101–145 (DFSS…TAAG), and 165–185 (DFSS…AVGG). A compositionally biased stretch (gly residues) spans 56-68 (SGGGGGGGGGYYY). Over residues 122-145 (PPASSTPTGTAPTPPLSTSSTAAG) the composition is skewed to low complexity. Residues 173-185 (SGGGTASSGAVGG) show a composition bias toward gly residues. The GRAS domain maps to 183-601 (VGGGGGGRWA…QPLVWASAWR (419 aa)). The segment at 190–253 (RWASQLLLEC…LTASGPRTLR (64 aa)) is leucine repeat I (LRI). The tract at residues 272 to 349 (ALRFQELSPW…PHLSITTVVS (78 aa)) is VHIID. The short motif at 311–315 (FHILD) is the VHIID element. The interval 365–401 (EIGQRMEKFARLMGVPFRFRAVHHSGDLAELDLDALD) is leucine repeat II (LRII). Residues 411–517 (LAVNCVNSLR…ERGAGRAIVD (107 aa)) form a PFYRE region. Positions 520–601 (SCPASESMER…QPLVWASAWR (82 aa)) are SAW.

It belongs to the GRAS family. Interacts with SCR1. Interacts with SMOS1. Expressed in leaves and roots. Detected in the stele, the endodermis and part of the cortex.

The protein localises to the nucleus. In terms of biological role, transcription factor required for the asymmetric cell division involved in radial pattern formation in roots. Essential for both cell division and cell specification. This is Protein SHORT-ROOT 1 from Oryza sativa subsp. japonica (Rice).